Reading from the N-terminus, the 145-residue chain is Large ribosomal subunit protein uL13 (145 aa).

It belongs to the universal ribosomal protein uL13 family. As to quaternary structure, part of the 50S ribosomal subunit.

Its function is as follows. This protein is one of the early assembly proteins of the 50S ribosomal subunit, although it is not seen to bind rRNA by itself. It is important during the early stages of 50S assembly. In Listeria monocytogenes serotype 4b (strain CLIP80459), this protein is Large ribosomal subunit protein uL13.